The sequence spans 183 residues: Phospholipase A2 inhibitor gamma subunit A1 (183 aa).

8 disulfides stabilise this stretch: cysteine 3-cysteine 28, cysteine 6-cysteine 13, cysteine 21-cysteine 49, cysteine 55-cysteine 76, cysteine 77-cysteine 82, cysteine 100-cysteine 125, cysteine 118-cysteine 147, and cysteine 151-cysteine 173. Asparagine 158 is a glycosylation site (N-linked (GlcNAc...) asparagine).

It belongs to the CNF-like-inhibitor family. As to quaternary structure, heterodimer of subunit A and subunit B. Expressed by the liver.

It is found in the secreted. Phospholipase A2 (PA2) inhibitor. Inhibits the enzymatic activity of PA2 of Deinagkistrodon acutus. Also shows a wide anti-hemorrhage activities to D.acutus, Naja atra and Agkistrodon halys venom. The native protein is more potent than the recombinant one. The protein is Phospholipase A2 inhibitor gamma subunit A1 of Trimerodytes annularis (Red-bellied annulate keelback).